Consider the following 73-residue polypeptide: QVHCYNSNFPKGMLLRFFVHFYDMEIIEEEAFLAWKEDITQEFPGKGKALFQVNQWLTWLETAEEEESEEEAD.

In terms of domain architecture, W2 spans Gln1–Glu70.

Belongs to the eukaryotic initiation factor 4G family. As to quaternary structure, interacts with the serine/threonine protein kinases MKNK1 and MKNK2. Binds EIF4A and EIF3. In terms of processing, phosphorylation; hyperphosphorylated during mitosis.

Its function is as follows. Appears to play a role in the switch from cap-dependent to IRES-mediated translation during mitosis, apoptosis and viral infection. Cleaved by some caspases and viral proteases. This Gallus gallus (Chicken) protein is Eukaryotic translation initiation factor 4 gamma 2 (EIF4G2).